A 139-amino-acid polypeptide reads, in one-letter code: TGKYPFICSECGKSFMDKRYLKIHSNVHSGNTFPCTECGKSFAAKQNLKRHQKIHTGEKPHKCTECGKQFLQKNKLDRHHLSHTGVKPFSCFECGEQFTWKHLLQYHQLSHTGERPFVCSECGKGYKTKASLALHCHIH.

C2H2-type zinc fingers lie at residues 6-28, 33-55, 61-83, 89-111, and 117-139; these read FICSECGKSFMDKRYLKIHSNVH, FPCTECGKSFAAKQNLKRHQKIH, HKCTECGKQFLQKNKLDRHHLSH, FSCFECGEQFTWKHLLQYHQLSH, and FVCSECGKGYKTKASLALHCHIH.

The protein belongs to the krueppel C2H2-type zinc-finger protein family.

The protein resides in the nucleus. Its function is as follows. May be involved in transcriptional regulation. This is Oocyte zinc finger protein XlCOF14 from Xenopus laevis (African clawed frog).